Here is a 176-residue protein sequence, read N- to C-terminus: NAD(P)H-quinone oxidoreductase subunit 6, chloroplastic (176 aa).

A run of 5 helical transmembrane segments spans residues 10–30 (FLLVFLGSGLILGALGVVLFT), 33–53 (IFSAFSLGLVLVCISLFYILA), 63–83 (LLIYVGAINVLIIFSVMFMSG), 105–125 (ISLFVSLISTILNTSWYGIIW), and 152–172 (FFLPFELISIILLVSLIGAIA).

This sequence belongs to the complex I subunit 6 family. In terms of assembly, NDH is composed of at least 16 different subunits, 5 of which are encoded in the nucleus.

It is found in the plastid. The protein localises to the chloroplast thylakoid membrane. It catalyses the reaction a plastoquinone + NADH + (n+1) H(+)(in) = a plastoquinol + NAD(+) + n H(+)(out). The enzyme catalyses a plastoquinone + NADPH + (n+1) H(+)(in) = a plastoquinol + NADP(+) + n H(+)(out). In terms of biological role, NDH shuttles electrons from NAD(P)H:plastoquinone, via FMN and iron-sulfur (Fe-S) centers, to quinones in the photosynthetic chain and possibly in a chloroplast respiratory chain. The immediate electron acceptor for the enzyme in this species is believed to be plastoquinone. Couples the redox reaction to proton translocation, and thus conserves the redox energy in a proton gradient. The protein is NAD(P)H-quinone oxidoreductase subunit 6, chloroplastic (ndhG) of Spinacia oleracea (Spinach).